A 427-amino-acid polypeptide reads, in one-letter code: MPCFDSVYTKEYAQQLDAVDPLARFRNEFYIDEDSIYLDGNSLGLLSTRAEQSLLDVLDSWKQYGIDGWTKGKHPWFYLSESLGEKMASLVGAKAEEVIVTGSTTTNLHQLVSSFFRPEGKKTKILADELNFPSDIYALKSQLHLQGFDPEEHLIQVKSDNGHLLNEEDIIAEMKEDIALIVLPSVLYRSGQILDMERLTTAAHQRNILIGFDLCHSIGAIPHQLRKWDVDFAFWCTYKHVNGGPGSVAALFVNEKHFGRRPGLAGWFSSNKQKQFDMEHTLTPAEHAGAFQIGTPHIFSIAPLIGSLAIFAEAGIEQIRKKSLKLTDYMMTLIEHELSDYQFTIQNPRDERRGAHLYIEHDEAARICKALKEENVIPDFRSPKGIRLAPVALYNTFKEVWNTIQVLKFIMKEERYKKFKNERDVVA.

Residues threonine 104, threonine 105, 132–135 (FPSD), aspartate 213, histidine 216, and tyrosine 238 contribute to the pyridoxal 5'-phosphate site. N6-(pyridoxal phosphate)lysine is present on lysine 239. Residues tryptophan 267 and threonine 295 each contribute to the pyridoxal 5'-phosphate site.

It belongs to the kynureninase family. In terms of assembly, homodimer. The cofactor is pyridoxal 5'-phosphate.

The catalysed reaction is L-kynurenine + H2O = anthranilate + L-alanine + H(+). It catalyses the reaction 3-hydroxy-L-kynurenine + H2O = 3-hydroxyanthranilate + L-alanine + H(+). Its pathway is amino-acid degradation; L-kynurenine degradation; L-alanine and anthranilate from L-kynurenine: step 1/1. It participates in cofactor biosynthesis; NAD(+) biosynthesis; quinolinate from L-kynurenine: step 2/3. In terms of biological role, catalyzes the cleavage of L-kynurenine (L-Kyn) and L-3-hydroxykynurenine (L-3OHKyn) into anthranilic acid (AA) and 3-hydroxyanthranilic acid (3-OHAA), respectively. The protein is Kynureninase of Shouchella clausii (strain KSM-K16) (Alkalihalobacillus clausii).